A 442-amino-acid polypeptide reads, in one-letter code: Tryptophan synthase beta chain 2 (442 aa).

Lys-122 is subject to N6-(pyridoxal phosphate)lysine.

Belongs to the TrpB family. As to quaternary structure, tetramer of two alpha and two beta chains. It depends on pyridoxal 5'-phosphate as a cofactor.

It carries out the reaction (1S,2R)-1-C-(indol-3-yl)glycerol 3-phosphate + L-serine = D-glyceraldehyde 3-phosphate + L-tryptophan + H2O. The protein operates within amino-acid biosynthesis; L-tryptophan biosynthesis; L-tryptophan from chorismate: step 5/5. The beta subunit is responsible for the synthesis of L-tryptophan from indole and L-serine. This Methanosarcina mazei (strain ATCC BAA-159 / DSM 3647 / Goe1 / Go1 / JCM 11833 / OCM 88) (Methanosarcina frisia) protein is Tryptophan synthase beta chain 2 (trpB2).